The sequence spans 94 residues: Protein LURE 1.1 (94 aa).

Positions 1–19 (MKLIFIFLTLLIFVSSCTS) are cleaved as a signal peptide. 3 cysteine pairs are disulfide-bonded: Cys58/Cys75, Cys61/Cys82, and Cys65/Cys84. Residues 67–87 (RRDRYIRTCSFERKLCRCSYS) form a PRK6 binding region.

The protein belongs to the DEFL family. Binds to PRK6 LRRs. In terms of tissue distribution, expressed in the pistil. Detected exclusively in the synergid cells.

It is found in the secreted. In terms of biological role, pollen tube attractants guiding pollen tubes to the ovular micropyle. The sequence is that of Protein LURE 1.1 from Arabidopsis thaliana (Mouse-ear cress).